The primary structure comprises 551 residues: DEAD-box ATP-dependent RNA helicase 47, mitochondrial (551 aa).

A mitochondrion-targeting transit peptide spans 1–29 (MAASTSTRFLVLLKDFSAFRKISWTCAAT). Residues 110 to 138 (KSFEELGLPDSLLDSLEREGFSVPTDVQS) carry the Q motif motif. In terms of domain architecture, Helicase ATP-binding spans 141–340 (VPAIIKGHDA…KSWSHEPVLV (200 aa)). 154–161 (SYTGSGKT) lines the ATP pocket. The DEAD box signature appears at 274 to 277 (DEVD). The 152-residue stretch at 397–548 (TLRRCVHALD…ELVVTEEDKA (152 aa)) folds into the Helicase C-terminal domain.

It belongs to the DEAD box helicase family. In terms of tissue distribution, mostly expressed in leaves and flowers, and, to a lower extent, in roots, seedlings and siliques, especially in meristematic regions.

The protein resides in the mitochondrion. It carries out the reaction ATP + H2O = ADP + phosphate + H(+). Essential protein required during embryogenesis. Required for mitochondrial metabolism. Necessary for normal plasmodesmata (PD) development and aperture regulation. The polypeptide is DEAD-box ATP-dependent RNA helicase 47, mitochondrial (RH47) (Arabidopsis thaliana (Mouse-ear cress)).